Consider the following 313-residue polypeptide: 1-phosphofructokinase (313 aa).

Residues Ser222–Gly227 and Gly254–Asp255 contribute to the ATP site. Asp255 acts as the Proton acceptor in catalysis.

This sequence belongs to the carbohydrate kinase PfkB family.

It catalyses the reaction beta-D-fructose 1-phosphate + ATP = beta-D-fructose 1,6-bisphosphate + ADP + H(+). In terms of biological role, catalyzes the ATP-dependent phosphorylation of fructose-l-phosphate to fructose-l,6-bisphosphate. The chain is 1-phosphofructokinase (fruK) from Haemophilus influenzae (strain ATCC 51907 / DSM 11121 / KW20 / Rd).